Here is a 370-residue protein sequence, read N- to C-terminus: Phosphate-binding protein PstS 3 (370 aa).

A signal peptide spans 1–22 (MKLNRFGAAVGVLAAGALVLSA). C23 is lipidated: N-palmitoyl cysteine. The S-diacylglycerol cysteine moiety is linked to residue C23. Residues 56 to 58 (STA), S86, D104, and 191 to 193 (SGT) contribute to the phosphate site.

It belongs to the PstS family. In terms of assembly, the complex is composed of two ATP-binding proteins (PstB), two transmembrane proteins (PstC and PstA) and a solute-binding protein (PstS).

It localises to the cell membrane. Functionally, part of the ABC transporter complex PstSACB involved in phosphate import. The chain is Phosphate-binding protein PstS 3 (pstS3) from Mycobacterium bovis (strain ATCC BAA-935 / AF2122/97).